The sequence spans 248 residues: UPF0280 protein Maeo_0343 (248 aa).

Belongs to the UPF0280 family.

The polypeptide is UPF0280 protein Maeo_0343 (Methanococcus aeolicus (strain ATCC BAA-1280 / DSM 17508 / OCM 812 / Nankai-3)).